Reading from the N-terminus, the 154-residue chain is Endoribonuclease YbeY (154 aa).

The Zn(2+) site is built by His114, His118, and His124.

It belongs to the endoribonuclease YbeY family. It depends on Zn(2+) as a cofactor.

The protein localises to the cytoplasm. In terms of biological role, single strand-specific metallo-endoribonuclease involved in late-stage 70S ribosome quality control and in maturation of the 3' terminus of the 16S rRNA. The sequence is that of Endoribonuclease YbeY from Histophilus somni (strain 2336) (Haemophilus somnus).